The following is a 253-amino-acid chain: 5-oxoprolinase subunit A (253 aa).

Belongs to the LamB/PxpA family. In terms of assembly, forms a complex composed of PxpA, PxpB and PxpC.

It carries out the reaction 5-oxo-L-proline + ATP + 2 H2O = L-glutamate + ADP + phosphate + H(+). Its function is as follows. Catalyzes the cleavage of 5-oxoproline to form L-glutamate coupled to the hydrolysis of ATP to ADP and inorganic phosphate. This Bacillus cereus (strain ATCC 10987 / NRS 248) protein is 5-oxoprolinase subunit A.